The primary structure comprises 313 residues: Small glutamine-rich tetratricopeptide repeat-containing protein alpha (313 aa).

Residues 66–100 (ATGKEMPQDLRSPARTPPSEEDSAEAERLKTEGNE) are disordered. Position 77 is a phosphoserine (Ser-77). Position 81 is a phosphothreonine (Thr-81). Ser-84 carries the phosphoserine modification. Residues 90–100 (EAERLKTEGNE) are compositionally biased toward basic and acidic residues. 3 TPR repeats span residues 91 to 124 (AERL…NPAN), 125 to 158 (AVYF…DPAY), and 159 to 192 (SKAY…DPDN). Lys-137 bears the N6-acetyllysine mark. The disordered stretch occupies residues 250-269 (MISGGNNPLGTPGTSPSQND). Ser-301 is subject to Phosphoserine. Thr-303 bears the Phosphothreonine mark. A Phosphoserine modification is found at Ser-305.

Belongs to the SGT family. As to quaternary structure, homodimer. Homooligomer. Interacts with DNAJC5 and DNAJC5B. Interacts (via TPR repeats) with HSP90AA1. Interacts (via Gln-rich region) with SLC2A1. Interacts with HSP90AB1. Interacts (via TPR repeats) with HSPA8/Hsc70; the interaction is direct. Interacts with BAG6 (via ubiquitin-like domain); interaction prevents interaction between BAG6 and RNF126. Forms a multiprotein complex, at least composed of DNAJB12, DNAJB14, HSPA8/Hsc70 and SGTA; interaction with DNAJB14 and HSPA8/Hsc70 is direct. (Microbial infection) Interacts with Vpu and Gag from HIV-1. In terms of assembly, (Microbial infection) Interacts with SARS-CoV accessory protein 7a. As to expression, ubiquitous.

The protein localises to the cytoplasm. Its subcellular location is the nucleus. Functionally, co-chaperone that binds misfolded and hydrophobic patches-containing client proteins in the cytosol. Mediates their targeting to the endoplasmic reticulum but also regulates their sorting to the proteasome when targeting fails. Functions in tail-anchored/type II transmembrane proteins membrane insertion constituting with ASNA1 and the BAG6 complex a targeting module. Functions upstream of the BAG6 complex and ASNA1, binding more rapidly the transmembrane domain of newly synthesized proteins. It is also involved in the regulation of the endoplasmic reticulum-associated misfolded protein catabolic process via its interaction with BAG6: collaborates with the BAG6 complex to maintain hydrophobic substrates in non-ubiquitinated states. Competes with RNF126 for interaction with BAG6, preventing the ubiquitination of client proteins associated with the BAG6 complex. Binds directly to HSC70 and HSP70 and regulates their ATPase activity. (Microbial infection) In case of infection by polyomavirus, involved in the virus endoplasmic reticulum membrane penetration and infection via interaction with DNAJB12, DNAJB14 and HSPA8/Hsc70. This is Small glutamine-rich tetratricopeptide repeat-containing protein alpha (SGTA) from Homo sapiens (Human).